The sequence spans 427 residues: CD209 antigen (427 aa).

At 1 to 37 the chain is on the cytoplasmic side; sequence MSDSKEPRLQQLGLLEEEQLRGLGFRQTRGYKSLAGC. 3 short sequence motifs (endocytosis signal) span residues 14–15, 16–18, and 31–34; these read LL, EEE, and YKSL. A helical; Signal-anchor for type II membrane protein transmembrane segment spans residues 38–58; sequence LGHGPLVLQLLSFTLLAALLV. Residues 59–427 lie on the Extracellular side of the membrane; sequence QVSKVPSSIS…ASATPNPPPE (369 aa). N-linked (GlcNAc...) asparagine glycosylation occurs at Asn80. 8 repeat units span residues 96-118, 119-141, 142-164, 165-187, 188-210, 211-233, 234-256, and 257-280. Residues 96–280 form an 8 X approximate tandem repeats region; that stretch reads KLQEIYQELT…AVERLCRRCP (185 aa). 3 cysteine pairs are disulfide-bonded: Cys279–Cys290, Cys307–Cys400, and Cys379–Cys392. In terms of domain architecture, C-type lectin spans 286 to 401; sequence FQGNCYFMSN…CNLAKFWICK (116 aa). Ca(2+) contacts are provided by Glu370, Asn372, Val374, Glu377, Asn388, and Asp389.

As to quaternary structure, homotetramer. Interacts with C1QBP; the interaction is indicative for a C1q:C1QBP:CD209 signaling complex. Interacts with ICAM2 and ICAM3 by binding to mannose-like carbohydrates. Interacts (via C-type lectin domain) with CEACAM1 (via Lewis X moieties); this interaction is regulated by the glycosylation pattern of CEACAM1 on cell types and regulates contact between dendritic cells and neutrophils.

It localises to the membrane. Pathogen-recognition receptor expressed on the surface of immature dendritic cells (DCs) and involved in initiation of primary immune response. Thought to mediate the endocytosis of pathogens which are subsequently degraded in lysosomal compartments. The receptor returns to the cell membrane surface and the pathogen-derived antigens are presented to resting T-cells via MHC class II proteins to initiate the adaptive immune response. Probably recognizes in a calcium-dependent manner high mannose N-linked oligosaccharides in a variety of pathogen antigens. In terms of biological role, on DCs it is a high affinity receptor for ICAM2 and ICAM3 by binding to mannose-like carbohydrates. May act as a DC rolling receptor that mediates transendothelial migration of DC presursors from blood to tissues by binding endothelial ICAM2. Seems to regulate DC-induced T-cell proliferation by binding to ICAM3 on T-cells in the immunological synapse formed between DC and T-cells. The protein is CD209 antigen (CD209) of Gorilla gorilla gorilla (Western lowland gorilla).